Reading from the N-terminus, the 581-residue chain is Solute carrier family 15 member 3 (581 aa).

Positions 1 to 14 are enriched in basic and acidic residues; that stretch reads MPAPRAREQPRVPG. Residues 1–26 are disordered; it reads MPAPRAREQPRVPGERQPLLPRGARG. Residues 38-58 traverse the membrane as a helical segment; the sequence is VLLVEMLERAAFFGVTANLVL. 2 N-linked (GlcNAc...) asparagine glycosylation sites follow: Asn-61 and Asn-66. 3 helical membrane passes run 76–96, 103–123, and 155–175; these read ALVF…LADV, AVAL…ATAF, and PYCA…ASSV. N-linked (GlcNAc...) asparagine glycosylation is present at Asn-178. A helical transmembrane segment spans residues 200 to 220; that stretch reads NWFYWSINLGAVLSLLVVAFI. An N-linked (GlcNAc...) asparagine glycan is attached at Asn-223. Transmembrane regions (helical) follow at residues 232-252 and 310-330; these read IPVG…PVFI and FQVL…WMVY. Residue Asn-356 is glycosylated (N-linked (GlcNAc...) asparagine). A run of 2 helical transmembrane segments spans residues 369-389 and 411-431; these read TIPE…LVPL and MALG…LEME. A glycan (N-linked (GlcNAc...) asparagine) is linked at Asn-439. 3 helical membrane-spanning segments follow: residues 458-478, 497-517, and 540-560; these read IWWQ…ASIP, GIFF…VALL, and LYFF…VWIA.

The protein belongs to the major facilitator superfamily. Proton-dependent oligopeptide transporter (POT/PTR) (TC 2.A.17) family.

Its subcellular location is the lysosome membrane. It is found in the endosome membrane. The catalysed reaction is glycylglycylglycine(out) + n H(+)(out) = glycylglycylglycine(in) + n H(+)(in). It catalyses the reaction carnosine(out) + n H(+)(out) = carnosine(in) + n H(+)(in). The enzyme catalyses L-histidine(out) + n H(+)(out) = L-histidine(in) + n H(+)(in). It carries out the reaction N-acetyl-D-muramoyl-L-alanyl-D-isoglutamine(out) + n H(+)(out) = N-acetyl-D-muramoyl-L-alanyl-D-isoglutamine(in) + n H(+)(in). In terms of biological role, proton-coupled amino-acid transporter that transports free histidine and certain di- and tripeptides, and is involved in innate immune response. Also able to transport carnosine. Involved in the detection of microbial pathogens by toll-like receptors (TLRs) and NOD-like receptors (NLRs), probably by mediating transport of bacterial peptidoglycans across the endolysosomal membrane: catalyzes the transport of certain bacterial peptidoglycans, such as muramyl dipeptide (MDP), the NOD2 ligand. The polypeptide is Solute carrier family 15 member 3 (Homo sapiens (Human)).